A 377-amino-acid chain; its full sequence is MSRGIIIIGSGFAARQLVKNIRKQDAHVPLTLIAADSMDEYNKPDLSHVISQSQRADDLTRQLAGEFAEQFNLRLFPHTWVADIDADAHVVKSQDKQWQYDKLVLATGATAFVPPIAGRELMLTLNSQQEYRACETQLRDAQRVLIVGGGLIGSELAMDFCRAGKTVTLMDNAASLLASLMPPEVSSRLQHHLTDMGVHLLLKSQLQKLEKTEAGIRATLVSQHSIEVDAVIAATGLRPETALARRAGVVVNRGVCVDSYLQTSHPDIYAIGDCAEINGQVLPFLQPIQLSAMYLAKNLLGGNAPLKLPAMLVKVKTPELPLHLAGETQRRDLSWHITAESDGMIAKGMSGEGQLRAFVVSEDRMKEAFALLKTLSV.

This sequence belongs to the FAD-dependent oxidoreductase family. It depends on FAD as a cofactor.

It localises to the cytoplasm. It carries out the reaction 2 reduced [nitric oxide reductase rubredoxin domain] + NAD(+) + H(+) = 2 oxidized [nitric oxide reductase rubredoxin domain] + NADH. The protein operates within nitrogen metabolism; nitric oxide reduction. One of at least two accessory proteins for anaerobic nitric oxide (NO) reductase. Reduces the rubredoxin moiety of NO reductase. This chain is Nitric oxide reductase FlRd-NAD(+) reductase, found in Salmonella dublin (strain CT_02021853).